The following is a 394-amino-acid chain: Elongation factor Tu (394 aa).

In terms of domain architecture, tr-type G spans 10-204 (KPHINVGTIG…AMDNYIPIPE (195 aa)). Residues 19–26 (GHVDHGKT) are G1. 19–26 (GHVDHGKT) is a binding site for GTP. Threonine 26 serves as a coordination point for Mg(2+). Positions 60-64 (GITIN) are G2. The segment at 81 to 84 (DCPG) is G3. GTP contacts are provided by residues 81–85 (DCPGH) and 136–139 (NKVD). Residues 136-139 (NKVD) are G4. The interval 174–176 (SAL) is G5.

Belongs to the TRAFAC class translation factor GTPase superfamily. Classic translation factor GTPase family. EF-Tu/EF-1A subfamily. As to quaternary structure, monomer.

The protein localises to the cytoplasm. The enzyme catalyses GTP + H2O = GDP + phosphate + H(+). In terms of biological role, GTP hydrolase that promotes the GTP-dependent binding of aminoacyl-tRNA to the A-site of ribosomes during protein biosynthesis. This is Elongation factor Tu from Methylacidiphilum infernorum (isolate V4) (Methylokorus infernorum (strain V4)).